The chain runs to 314 residues: Epithelial cell adhesion molecule (314 aa).

The first 23 residues, 1–23 (MAPPQVLAFGLLLAAATAAVAAA), serve as a signal peptide directing secretion. Topologically, residues 24–265 (QQGCVCENYK…PPEFSMQGLQ (242 aa)) are extracellular. Disulfide bonds link C27-C46, C29-C59, C38-C48, C66-C99, C110-C116, and C118-C135. A glycan (N-linked (GlcNAc...) asparagine) is linked at N37. The region spanning 63 to 135 (ASKCLVMKAE…RTDKDSEISC (73 aa)) is the Thyroglobulin type-1 domain. The N-linked (GlcNAc...) asparagine glycan is linked to N111. N198 is a glycosylation site (N-linked (GlcNAc...) asparagine). The chain crosses the membrane as a helical span at residues 266–288 (AGIIAVIAVVAIAIVAGIIVLIV). Over 289–314 (STKKRRAKYEKAEIKEMGEMHRELNA) the chain is Cytoplasmic.

This sequence belongs to the EPCAM family. As to quaternary structure, monomer. Interacts with phosphorylated CLDN7. In terms of processing, glycosylation at Asn-198 is crucial for protein stability.

The protein localises to the lateral cell membrane. The protein resides in the cell junction. Its subcellular location is the tight junction. Its function is as follows. May act as a physical homophilic interaction molecule between intestinal epithelial cells (IECs) and intraepithelial lymphocytes (IELs) at the mucosal epithelium for providing immunological barrier as a first line of defense against mucosal infection. Plays a role in embryonic stem cells proliferation and differentiation. Up-regulates the expression of FABP5, MYC and cyclins A and E. The chain is Epithelial cell adhesion molecule (TACSTD1) from Sus scrofa (Pig).